We begin with the raw amino-acid sequence, 2443 residues long: NFX1-type zinc finger-containing protein 1 homolog (2443 aa).

Disordered stretches follow at residues 212-339 (PHKQ…EGDH), 545-566 (SSDS…NVYG), and 583-672 (HRDN…FVSP). The segment covering 246-263 (ISISNSSPPGLSSVSPIP) has biased composition (low complexity). Residues 275-294 (PQPPGLSIPAPPGISLPTPP) show a composition bias toward pro residues. Positions 297 to 310 (SLQNHQNDQFEQAH) are enriched in polar residues. Residues 311–322 (STISRMSENSSS) are compositionally biased toward low complexity. Residues 545-564 (SSDSGRQVLSESRGAGSSNV) show a composition bias toward polar residues. Composition is skewed to basic and acidic residues over residues 601 to 638 (GEVH…RRDQ) and 662 to 672 (EHSRDDKFVSP). The region spanning 1040 to 1545 (MDESQRLAFC…MNLTISDKIV (506 aa)) is the UvrD-like helicase ATP-binding domain. 1061-1068 (GPPGTGKT) serves as a coordination point for ATP. 4 consecutive NF-X1-type zinc fingers follow at residues 1769 to 1791 (CGHV…RCLY), 1853 to 1873 (CGHA…ECSQ), 1912 to 1930 (CPHK…ECME), and 2027 to 2044 (CGHT…PCKA).

This sequence belongs to the ZNFX1 family. As to quaternary structure, interacts with ego-1, csr-1, wago-1 and prg-1. Interacts with wago-4; the interaction promotes the transmission of epigenetic information across generations. In terms of tissue distribution, expressed in germs cells. Not expressed in somatic tissues.

It is found in the cytoplasm. The protein localises to the perinuclear region. It localises to the cytoplasmic granule. The enzyme catalyses ATP + H2O = ADP + phosphate + H(+). Its function is as follows. Epigenetic inheritance factor which, in association with the Argonaute protein wago-4, mediates small RNA-directed transgenerational epigenetic inheritance and thus balances the transgenerational inheritance of epigenetic information. Specifically, maintains a balanced production of small RNAs by preventing the spread of epigenetic signals towards the 5'-end of target mRNAs. Plays a role in small RNA-induced gene silencing in the germline. The chain is NFX1-type zinc finger-containing protein 1 homolog from Caenorhabditis elegans.